We begin with the raw amino-acid sequence, 184 residues long: uncharacterized protein (184 aa).

An N-terminal signal peptide occupies residues 1-20 (MKKQILALVCGVIFSSSTWA).

It to E.coli YtfJ.

The protein localises to the periplasm. This is an uncharacterized protein from Haemophilus influenzae (strain ATCC 51907 / DSM 11121 / KW20 / Rd).